We begin with the raw amino-acid sequence, 448 residues long: MRFDPSEIGEVLEMLLFRELDIRAVTLSVNTLPAIRPTVGDTLAALEETLEPLLKRLRPAVERVASRLGVKIVTVRLAVSPISIMLEPIGKAEAAVEIAKHLDGLAEKHGVDMVGGFSAFVHAGVSRGDAALMEALPEALNSTRRLAGFLNVASTATGVNMDAVRAAAEAVLKMEPHAAARFAATANMPEDVPFMPGAYHGLGLPDAVVNIAVSGPGVIEAVVRNMPNADVRTLHDAIKRAAFKITRLGELVGREVAKELGVPFGSVDLSVAPSPKVGDSVAAILEAVGLPRVGAPGTLFALALFVDAVKKGGAMATSTIGGLSGAFIPVSEDVVMAEAAREGALTFDTLKSTLAVCNTGIDMAGIPGDAPPDAVAALIADVMAVAVALDKALGVRLVPIPGAKPGDVYDLGGLYGRVVVMDLGKYRDIPLARRKGTAPPAVERLKKG.

The protein belongs to the UPF0210 family.

The polypeptide is UPF0210 protein Pisl_0759 (Pyrobaculum islandicum (strain DSM 4184 / JCM 9189 / GEO3)).